Here is a 309-residue protein sequence, read N- to C-terminus: Tagatose-6-phosphate kinase (309 aa).

This sequence belongs to the carbohydrate kinase PfkB family. LacC subfamily.

The catalysed reaction is D-tagatofuranose 6-phosphate + ATP = D-tagatofuranose 1,6-bisphosphate + ADP + H(+). It participates in carbohydrate metabolism; D-tagatose 6-phosphate degradation; D-glyceraldehyde 3-phosphate and glycerone phosphate from D-tagatose 6-phosphate: step 1/2. The chain is Tagatose-6-phosphate kinase from Streptococcus pneumoniae (strain ATCC 700669 / Spain 23F-1).